The sequence spans 234 residues: Ribosomal RNA small subunit methyltransferase G (234 aa).

Residues glycine 74, phenylalanine 79, 125–126 (AE), and arginine 144 contribute to the S-adenosyl-L-methionine site.

The protein belongs to the methyltransferase superfamily. RNA methyltransferase RsmG family.

It is found in the cytoplasm. In terms of biological role, specifically methylates the N7 position of a guanine in 16S rRNA. In Roseiflexus sp. (strain RS-1), this protein is Ribosomal RNA small subunit methyltransferase G.